Consider the following 251-residue polypeptide: Copper transport protein CTR1 (251 aa).

The chain crosses the membrane as a helical span at residues 90–110; the sequence is AFGIFVLLFFVAFLARMLEFV. Basic and acidic residues predominate over residues 157-173; sequence DESIDKQNSPQHEETTK. The segment at 157–176 is disordered; sequence DESIDKQNSPQHEETTKARG. The chain crosses the membrane as a helical span at residues 208-228; the sequence is MLAAMTYTLTYFFAVVIGSGV.

As to quaternary structure, oligomer.

It is found in the cell membrane. In terms of biological role, required for high affinity copper (probably reduced Cu I) transport into the cell. This Candida albicans (strain SC5314 / ATCC MYA-2876) (Yeast) protein is Copper transport protein CTR1 (CTR1).